The sequence spans 284 residues: Protein Ku (284 aa).

A Ku domain is found at 10–189 (TIGLVTVPVK…ELRSTEGIVP (180 aa)).

Homodimer. Interacts with host LigD.

Functionally, required for replication of viruses with short cos ends (4 bases). Stimulates dsDNA end-joining by host LigD. Binds dsDNA with either blunt, 5'- or 3-overhangs, protecting it from host exonuclease degradation. This Mycobacterium phage Corndog (Mycobacteriophage Corndog) protein is Protein Ku (87).